A 337-amino-acid chain; its full sequence is Mannitol dehydrogenase (337 aa).

7 residues coordinate Zn(2+): cysteine 27, histidine 49, cysteine 80, cysteine 83, cysteine 86, cysteine 94, and cysteine 143.

This sequence belongs to the zinc-containing alcohol dehydrogenase family. Requires Zn(2+) as cofactor.

It catalyses the reaction D-mannitol + NAD(+) = D-mannose + NADH + H(+). Functionally, oxidizes mannitol to mannose. Provides the initial step by which translocated mannitol is committed to central metabolism and, by regulating mannitol pool size, is important in regulating salt tolerance at the cellular level. This chain is Mannitol dehydrogenase (ELI3), found in Petroselinum crispum (Parsley).